The primary structure comprises 700 residues: Beta-galactosidase Bga (700 aa).

Arg103 contacts substrate. Zn(2+) is bound at residue Cys107. Asn141 contributes to the substrate binding site. The active-site Proton donor is Glu142. 3 residues coordinate Zn(2+): Cys151, Cys153, and Cys156. Glu312 acts as the Nucleophile in catalysis. Residues Trp320 and 360 to 363 each bind substrate; that span reads EQYH. A compositionally biased stretch (acidic residues) spans 648–658; the sequence is DPESLAVDDTD. Positions 648 to 674 are disordered; sequence DPESLAVDDTDRDGFDPMADDDKDSSA.

This sequence belongs to the glycosyl hydrolase 42 family.

The catalysed reaction is Hydrolysis of terminal non-reducing beta-D-galactose residues in beta-D-galactosides.. With respect to regulation, requires 4 M NaCl or KCl for maximal activity. Its function is as follows. Cleaves o-nitrophenyl-beta-D-galactopyranoside (ONPG) in vitro. This Halorubrum lacusprofundi (strain ATCC 49239 / DSM 5036 / JCM 8891 / ACAM 34) protein is Beta-galactosidase Bga.